We begin with the raw amino-acid sequence, 78 residues long: MPLTVKCPTCQTEVTWDETSKFKPFCSDRCKLIDLGDWAAEKNAIPVKPEFDPEMLDQLGYDEADFFMDDGSMDDKKQ.

Residues C7, C10, C26, and C30 each coordinate Zn(2+).

This sequence belongs to the DNA gyrase inhibitor YacG family. In terms of assembly, interacts with GyrB. Zn(2+) is required as a cofactor.

Functionally, inhibits all the catalytic activities of DNA gyrase by preventing its interaction with DNA. Acts by binding directly to the C-terminal domain of GyrB, which probably disrupts DNA binding by the gyrase. This chain is DNA gyrase inhibitor YacG, found in Shewanella piezotolerans (strain WP3 / JCM 13877).